Here is a 374-residue protein sequence, read N- to C-terminus: Tomoregulin-2 (374 aa).

An N-terminal signal peptide occupies residues 1–39 (MVLWESPRQCSSWTLCEGFCWLLLLPVMLLIVARPVKLA). The Extracellular portion of the chain corresponds to 40–320 (AFPTSLSDCQ…VPGPVRFQYV (281 aa)). Asparagine 55 carries an N-linked (GlcNAc...) asparagine glycan. 2 Kazal-like domains span residues 90-137 (VCQF…SCAT) and 181-229 (VCNI…RCQD). Cystine bridges form between cysteine 91–cysteine 121, cysteine 95–cysteine 114, cysteine 103–cysteine 135, cysteine 182–cysteine 213, cysteine 186–cysteine 206, cysteine 195–cysteine 227, cysteine 265–cysteine 278, cysteine 273–cysteine 289, and cysteine 291–cysteine 300. The EGF-like domain occupies 261–301 (HHIPCPEHYNGFCMHGKCEHSINMQEPSCRCDAGYTGQHCE). The required for shedding stretch occupies residues 303–320 (KDYSVLYVVPGPVRFQYV). Residues 321-341 (LIAAVIGTIQIAVICVVVLCI) form a helical membrane-spanning segment. Topologically, residues 342 to 374 (TRKCPRSNRIHRQKQNTGHYSSDNTTRASTRLI) are cytoplasmic. Residues 353 to 374 (RQKQNTGHYSSDNTTRASTRLI) form a disordered region. Over residues 356-374 (QNTGHYSSDNTTRASTRLI) the composition is skewed to polar residues.

It belongs to the tomoregulin family. In terms of processing, O-glycosylated; contains chondroitin sulfate glycosaminoglycans. Post-translationally, a soluble form (TMEFF2-ECD) is produced by proteolytic shedding. This shedding can be induced by phorbol ester or pro-inflammatory cytokines such as TNFalpha, and is mediated by a metalloproteinase ADAM.

The protein resides in the membrane. In terms of biological role, may be a survival factor for hippocampal and mesencephalic neurons. The shedded form may up-regulate cell proliferation. The chain is Tomoregulin-2 (TMEFF2) from Bos taurus (Bovine).